Reading from the N-terminus, the 382-residue chain is uncharacterized protein (382 aa).

12 consecutive transmembrane segments (helical) span residues 14 to 34 (GLLLLTLAIAVLNTLVPLWLA), 45 to 65 (VVSSSYFTGNLVGTLLTGYVI), 79 to 99 (FIFAAGCAGLGLMIGFWSWLA), 102 to 122 (FVAGVGCAMIWVVVESALMCS), 131 to 151 (LLAAYMMVYYVGTFLGQLLVS), 157 to 177 (LMSVLPWVTGLTLAGILPLLF), 204 to 224 (LGVNGCIISGIVLGSLYGLMP), 235 to 255 (ASIGFWMAVLVSAGILGQWPI), 270 to 290 (VQVFVVILGSIAMLSQAAMAP), 291 to 311 (ALFILGAAGFTLYPVAMAWAC), 325 to 345 (ALLLSYTVGSLLGPSFTAMLM), and 348 to 368 (FSDNLLFIMIASVSFIYLLML).

It belongs to the major facilitator superfamily. YcaD (TC 2.A.1.26) family.

Its subcellular location is the cell inner membrane. This is an uncharacterized protein from Escherichia coli (strain K12 / MC4100 / BW2952).